Reading from the N-terminus, the 202-residue chain is Large ribosomal subunit protein uL4 (202 aa).

The tract at residues Gly40–Ala71 is disordered. Over residues Ser44 to Val53 the composition is skewed to polar residues.

Belongs to the universal ribosomal protein uL4 family. In terms of assembly, part of the 50S ribosomal subunit.

In terms of biological role, one of the primary rRNA binding proteins, this protein initially binds near the 5'-end of the 23S rRNA. It is important during the early stages of 50S assembly. It makes multiple contacts with different domains of the 23S rRNA in the assembled 50S subunit and ribosome. Its function is as follows. Forms part of the polypeptide exit tunnel. This Hahella chejuensis (strain KCTC 2396) protein is Large ribosomal subunit protein uL4.